An 808-amino-acid chain; its full sequence is Dynamin-like protein B (808 aa).

The Dynamin-type G domain occupies 43–340 (FIETPEFVFI…TWRKYLDSVP (298 aa)). The interval 53–60 (GKDGNGKS) is G1 motif. Residue 53–60 (GKDGNGKS) participates in GTP binding. The G2 motif stretch occupies residues 79-80 (LR). Residues 150-153 (EPPS) form a G3 motif region. GTP contacts are provided by residues 150 to 154 (EPPSV) and 239 to 242 (NKFH). The G4 motif stretch occupies residues 239–242 (NKFH). Positions 276–279 (PSTA) are G5 motif. Disordered regions lie at residues 536–565 (SSFR…SSSI) and 665–695 (SLNN…NSNH). 2 stretches are compositionally biased toward low complexity: residues 552 to 565 (SSPS…SSSI) and 665 to 694 (SLNN…NNSN).

This sequence belongs to the TRAFAC class dynamin-like GTPase superfamily. Dynamin/Fzo/YdjA family.

It is found in the cytoplasm. It carries out the reaction GTP + H2O = GDP + phosphate + H(+). Involved in cytokinesis. May hydrolyze GTP. The sequence is that of Dynamin-like protein B (dlpB) from Dictyostelium discoideum (Social amoeba).